The following is a 249-amino-acid chain: Ribonuclease HII (249 aa).

Residues 1–19 (MAPRPKAPPQPAEPDPALP) are compositionally biased toward pro residues. The tract at residues 1–31 (MAPRPKAPPQPAEPDPALPRPRGRPPKAGAV) is disordered. Residues 52-240 (APVAGADEVG…VREQQLGLFP (189 aa)) form the RNase H type-2 domain. Residues aspartate 58, glutamate 59, and aspartate 149 each contribute to the a divalent metal cation site.

This sequence belongs to the RNase HII family. The cofactor is Mn(2+). Mg(2+) serves as cofactor.

It is found in the cytoplasm. The catalysed reaction is Endonucleolytic cleavage to 5'-phosphomonoester.. Functionally, endonuclease that specifically degrades the RNA of RNA-DNA hybrids. This chain is Ribonuclease HII, found in Xanthobacter autotrophicus (strain ATCC BAA-1158 / Py2).